Here is a 73-residue protein sequence, read N- to C-terminus: Eukaryotic translation initiation factor 4 gamma 2 (73 aa).

Positions 1 to 70 constitute a W2 domain; that stretch reads QVHCYNSNFP…ETAEEEESEE (70 aa).

This sequence belongs to the eukaryotic initiation factor 4G family. In terms of assembly, interacts with the serine/threonine protein kinases MKNK1 and MKNK2. Binds EIF4A and EIF3. Post-translationally, phosphorylation; hyperphosphorylated during mitosis.

In terms of biological role, appears to play a role in the switch from cap-dependent to IRES-mediated translation during mitosis, apoptosis and viral infection. Cleaved by some caspases and viral proteases. In Gallus gallus (Chicken), this protein is Eukaryotic translation initiation factor 4 gamma 2 (EIF4G2).